A 107-amino-acid polypeptide reads, in one-letter code: UPF0145 protein YbjQ (107 aa).

This sequence belongs to the UPF0145 family.

The chain is UPF0145 protein YbjQ from Escherichia coli (strain SMS-3-5 / SECEC).